Here is a 149-residue protein sequence, read N- to C-terminus: Immunoglobulin kappa chain variable 6-17 (149 aa).

The signal sequence occupies residues 1-29; the sequence is MHHTSMGIKMESQIQVFVFVFLWLSGVDG. 2 consecutive repeats follow at residues 26–35 and 38–47; these read GVDGDIVMTQ. A framework-1 region spans residues 42 to 64; sequence DIVMTQSHKFMSTSVGDRVSITC. The complementarity-determining-1 stretch occupies residues 65 to 75; sequence KASQDVSTTVA. Positions 76-90 are framework-2; the sequence is WYQQKPGQSPKLLIY. The tract at residues 91-97 is complementarity-determining-2; the sequence is SASYRYT. Positions 98–129 are framework-3; it reads GVPDRFTGSGSGTDFTFTISSVQAEDLAVYYC. The interval 130-138 is complementarity-determining-3; the sequence is QQHYSTPPT. The framework-4 stretch occupies residues 139–148; sequence FGGGTKLEIK.

This is Immunoglobulin kappa chain variable 6-17 from Mus musculus (Mouse).